The sequence spans 337 residues: Pyrophosphate--fructose 6-phosphate 1-phosphotransferase (337 aa).

Gly10 contributes to the diphosphate binding site. Asp101 is a binding site for Mg(2+). Residues 124-126, Arg161, 168-170, Glu220, Arg257, and 263-266 contribute to the substrate site; these read TID, MGR, and HTIR. Asp126 acts as the Proton acceptor in catalysis.

This sequence belongs to the phosphofructokinase type A (PFKA) family. Mixed-substrate PFK group III subfamily. As to quaternary structure, homodimer or homotrimer. The cofactor is Mg(2+).

The protein resides in the cytoplasm. It catalyses the reaction beta-D-fructose 6-phosphate + diphosphate = beta-D-fructose 1,6-bisphosphate + phosphate + H(+). The protein operates within carbohydrate degradation; glycolysis; D-glyceraldehyde 3-phosphate and glycerone phosphate from D-glucose: step 3/4. Its activity is regulated as follows. Non-allosteric. In terms of biological role, catalyzes the phosphorylation of D-fructose 6-phosphate, the first committing step of glycolysis. Uses inorganic phosphate (PPi) as phosphoryl donor instead of ATP like common ATP-dependent phosphofructokinases (ATP-PFKs), which renders the reaction reversible, and can thus function both in glycolysis and gluconeogenesis. Consistently, PPi-PFK can replace the enzymes of both the forward (ATP-PFK) and reverse (fructose-bisphosphatase (FBPase)) reactions. In Thermoproteus tenax (strain ATCC 35583 / DSM 2078 / JCM 9277 / NBRC 100435 / Kra 1), this protein is Pyrophosphate--fructose 6-phosphate 1-phosphotransferase.